A 748-amino-acid chain; its full sequence is WD repeat-containing protein 91 (748 aa).

Positions 183-228 form a coiled coil; that stretch reads QRTNQVQEENEVLRQKLFALQAEIHRLKKEEQQQEEEAAALVQHKL. Serine 257 is subject to Phosphoserine. Low complexity predominate over residues 266-279; that stretch reads LLPQSKKSPSRLSP. Residues 266–368 are disordered; that stretch reads LLPQSKKSPS…PEVSGAEAEP (103 aa). Polar residues predominate over residues 284–300; sequence PQAQSSAKKDSFSSQAT. Serine 289 and serine 294 each carry phosphoserine. The segment covering 333–344 has biased composition (basic and acidic residues); the sequence is RLQDHGKERREL. The span at 345–354 shows a compositional bias: polar residues; the sequence is LSTSSSQSQC. WD repeat units follow at residues 407–446, 449–489, 512–556, 561–600, 603–642, 665–703, and 710–748; these read EHHSSIMHCRVDCSGRRVASLDVDGVIKVWSFNPIMQTKA, ISKS…NLCE, VCSA…QQLQ, PEPIAINCTAFNHNGNLLVTGAADGVIRLFDMQQHECAMS, AHCGEVYSVEFSCDENAVYSIGEDRKFIQWNIHKSGLKVS, VQVPRGRLFAFDSEGNYMLTCSATGGLIYKLGSEEKVLE, and GHRAPVVTVDWSTAMDCGTCLTASMDGKIKLTTLLAHKL.

This sequence belongs to the WD repeat WDR91 family. In terms of assembly, interacts with WDR81; involved in early to late endosome cargo transport. Interacts with BECN1; negatively regulates the PI3 kinase/PI3K activity associated with endosomal membranes.

Its subcellular location is the early endosome membrane. It is found in the late endosome membrane. Its function is as follows. Functions as a negative regulator of the PI3 kinase/PI3K activity associated with endosomal membranes via BECN1, a core subunit of the PI3K complex. By modifying the phosphatidylinositol 3-phosphate/PtdInsP3 content of endosomal membranes may regulate endosome fusion, recycling, sorting and early to late endosome transport. It is for instance, required for the delivery of cargos like BST2/tetherin from early to late endosome and thereby participates indirectly to their degradation by the lysosome. May play a role in meiosis. This is WD repeat-containing protein 91 from Mus musculus (Mouse).